The sequence spans 254 residues: Pyridoxine 5'-phosphate synthase (254 aa).

Residue Asn12 coordinates 3-amino-2-oxopropyl phosphate. Residue 14–15 (DH) coordinates 1-deoxy-D-xylulose 5-phosphate. A 3-amino-2-oxopropyl phosphate-binding site is contributed by Arg23. Residue His48 is the Proton acceptor of the active site. Arg50 and His55 together coordinate 1-deoxy-D-xylulose 5-phosphate. The active-site Proton acceptor is the Glu75. Thr105 is a binding site for 1-deoxy-D-xylulose 5-phosphate. The active-site Proton donor is His199. Residues Gly200 and 221–222 (GF) each bind 3-amino-2-oxopropyl phosphate.

The protein belongs to the PNP synthase family. As to quaternary structure, homooctamer; tetramer of dimers.

The protein resides in the cytoplasm. The catalysed reaction is 3-amino-2-oxopropyl phosphate + 1-deoxy-D-xylulose 5-phosphate = pyridoxine 5'-phosphate + phosphate + 2 H2O + H(+). It participates in cofactor biosynthesis; pyridoxine 5'-phosphate biosynthesis; pyridoxine 5'-phosphate from D-erythrose 4-phosphate: step 5/5. Catalyzes the complicated ring closure reaction between the two acyclic compounds 1-deoxy-D-xylulose-5-phosphate (DXP) and 3-amino-2-oxopropyl phosphate (1-amino-acetone-3-phosphate or AAP) to form pyridoxine 5'-phosphate (PNP) and inorganic phosphate. This chain is Pyridoxine 5'-phosphate synthase, found in Rhodopseudomonas palustris (strain HaA2).